A 475-amino-acid chain; its full sequence is Aspartyl/glutamyl-tRNA(Asn/Gln) amidotransferase subunit B (475 aa).

The protein belongs to the GatB/GatE family. GatB subfamily. As to quaternary structure, heterotrimer of A, B and C subunits.

The enzyme catalyses L-glutamyl-tRNA(Gln) + L-glutamine + ATP + H2O = L-glutaminyl-tRNA(Gln) + L-glutamate + ADP + phosphate + H(+). The catalysed reaction is L-aspartyl-tRNA(Asn) + L-glutamine + ATP + H2O = L-asparaginyl-tRNA(Asn) + L-glutamate + ADP + phosphate + 2 H(+). In terms of biological role, allows the formation of correctly charged Asn-tRNA(Asn) or Gln-tRNA(Gln) through the transamidation of misacylated Asp-tRNA(Asn) or Glu-tRNA(Gln) in organisms which lack either or both of asparaginyl-tRNA or glutaminyl-tRNA synthetases. The reaction takes place in the presence of glutamine and ATP through an activated phospho-Asp-tRNA(Asn) or phospho-Glu-tRNA(Gln). This chain is Aspartyl/glutamyl-tRNA(Asn/Gln) amidotransferase subunit B, found in Pelodictyon phaeoclathratiforme (strain DSM 5477 / BU-1).